Here is a 257-residue protein sequence, read N- to C-terminus: Aspartate/glutamate leucyltransferase (257 aa).

The protein belongs to the R-transferase family. Bpt subfamily.

It is found in the cytoplasm. It carries out the reaction N-terminal L-glutamyl-[protein] + L-leucyl-tRNA(Leu) = N-terminal L-leucyl-L-glutamyl-[protein] + tRNA(Leu) + H(+). The catalysed reaction is N-terminal L-aspartyl-[protein] + L-leucyl-tRNA(Leu) = N-terminal L-leucyl-L-aspartyl-[protein] + tRNA(Leu) + H(+). Functions in the N-end rule pathway of protein degradation where it conjugates Leu from its aminoacyl-tRNA to the N-termini of proteins containing an N-terminal aspartate or glutamate. The polypeptide is Aspartate/glutamate leucyltransferase (Phenylobacterium zucineum (strain HLK1)).